A 76-amino-acid chain; its full sequence is MFNMKKSLLLLFFLGTISLSLCEEERDADEDDGVEMTEEEVKRSLLDTFKNLAVNAAKSAGVSVLNALSCKISRTC.

The signal sequence occupies residues 1-22; the sequence is MFNMKKSLLLLFFLGTISLSLC. A propeptide spans 23 to 41 (removed in mature form); that stretch reads EEERDADEDDGVEMTEEEV. Cysteines 70 and 76 form a disulfide.

As to expression, expressed by the skin glands.

The protein localises to the secreted. Functionally, has antimicrobial activity against Gram-negative bacterium E.coli ATCC 8739 (MIC=50 ug), against Gram positive bacteria S.aureus ATCC 6538 (MIC=12.5 ug), methicillin-resistant S.aureus ATCC 43300 (MIC=100 ug) and B.subtilis ATCC 6633 (MIC=12.5 ug). Has no activity against fungus C.albicans ATCC 90028. In Odorrana ishikawae (Ishikawa's frog), this protein is Brevinin-2ISa.